A 247-amino-acid polypeptide reads, in one-letter code: Small ribosomal subunit protein uS2 (247 aa).

The protein belongs to the universal ribosomal protein uS2 family.

The sequence is that of Small ribosomal subunit protein uS2 from Pseudomonas savastanoi pv. phaseolicola (strain 1448A / Race 6) (Pseudomonas syringae pv. phaseolicola (strain 1448A / Race 6)).